The sequence spans 222 residues: Ribonuclease S-3 (222 aa).

An N-terminal signal peptide occupies residues 1–22 (MFRLQLISAFFILLFSLSPVSA). An intrachain disulfide couples C38 to C44. N-linked (GlcNAc...) asparagine glycosylation occurs at N50. H54 acts as the Proton donor in catalysis. RNA is bound by residues H54, 92 to 93 (QM), 109 to 110 (HE), and 113 to 114 (RH). Intrachain disulfides connect C68–C117, C177–C210, and C193–C204. E110 is a catalytic residue. Residue H114 is the Proton acceptor of the active site.

Belongs to the RNase T2 family.

It localises to the secreted. It is found in the extracellular space. The enzyme catalyses a ribonucleotidyl-ribonucleotide-RNA + H2O = a 3'-end 3'-phospho-ribonucleotide-RNA + a 5'-end dephospho-ribonucleoside-RNA + H(+). Its function is as follows. Self-incompatibility (SI) is the inherited ability of a flowering plant to prevent self-fertilization by discriminating between self and non-self pollen during pollination. In many species, self-incompatibility is controlled by the single, multiallelic locus S. This Petunia hybrida (Petunia) protein is Ribonuclease S-3 (S3).